A 512-amino-acid chain; its full sequence is ATP synthase subunit alpha 2 (512 aa).

169–176 (GDRQTGKT) is a binding site for ATP.

Belongs to the ATPase alpha/beta chains family. As to quaternary structure, F-type ATPases have 2 components, CF(1) - the catalytic core - and CF(0) - the membrane proton channel. CF(1) has five subunits: alpha(3), beta(3), gamma(1), delta(1), epsilon(1). CF(0) has three main subunits: a(1), b(2) and c(9-12). The alpha and beta chains form an alternating ring which encloses part of the gamma chain. CF(1) is attached to CF(0) by a central stalk formed by the gamma and epsilon chains, while a peripheral stalk is formed by the delta and b chains.

It localises to the cell inner membrane. It catalyses the reaction ATP + H2O + 4 H(+)(in) = ADP + phosphate + 5 H(+)(out). Functionally, produces ATP from ADP in the presence of a proton gradient across the membrane. The alpha chain is a regulatory subunit. The chain is ATP synthase subunit alpha 2 from Vibrio campbellii (strain ATCC BAA-1116).